The sequence spans 361 residues: Peptide chain release factor 1 (361 aa).

An N5-methylglutamine modification is found at Gln-237. A compositionally biased stretch (basic and acidic residues) spans 287–297 (KQQKEQSDTRK). The interval 287–313 (KQQKEQSDTRKSLVGSGDRSERIRTYN) is disordered.

This sequence belongs to the prokaryotic/mitochondrial release factor family. Methylated by PrmC. Methylation increases the termination efficiency of RF1.

It is found in the cytoplasm. Its function is as follows. Peptide chain release factor 1 directs the termination of translation in response to the peptide chain termination codons UAG and UAA. In Francisella tularensis subsp. tularensis (strain FSC 198), this protein is Peptide chain release factor 1.